Consider the following 151-residue polypeptide: Endoribonuclease YbeY (151 aa).

The Zn(2+) site is built by histidine 108, histidine 112, and aspartate 118.

This sequence belongs to the endoribonuclease YbeY family. Requires Zn(2+) as cofactor.

The protein resides in the cytoplasm. In terms of biological role, single strand-specific metallo-endoribonuclease involved in late-stage 70S ribosome quality control and in maturation of the 3' terminus of the 16S rRNA. The chain is Endoribonuclease YbeY from Porphyromonas gingivalis (strain ATCC BAA-308 / W83).